The following is a 330-amino-acid chain: Aspartate--ammonia ligase (330 aa).

It belongs to the class-II aminoacyl-tRNA synthetase family. AsnA subfamily.

The protein resides in the cytoplasm. It carries out the reaction L-aspartate + NH4(+) + ATP = L-asparagine + AMP + diphosphate + H(+). It functions in the pathway amino-acid biosynthesis; L-asparagine biosynthesis; L-asparagine from L-aspartate (ammonia route): step 1/1. The chain is Aspartate--ammonia ligase from Escherichia fergusonii (strain ATCC 35469 / DSM 13698 / CCUG 18766 / IAM 14443 / JCM 21226 / LMG 7866 / NBRC 102419 / NCTC 12128 / CDC 0568-73).